Reading from the N-terminus, the 239-residue chain is Myogenic factor 6 (239 aa).

The segment at 28–64 is disordered; the sequence is HLDMSGVSPLYNGNDSPLSPGQDNVPSETGGESSGDE. Residues 38–58 are compositionally biased toward polar residues; that stretch reads YNGNDSPLSPGQDNVPSETGG. The 52-residue stretch at 96–147 folds into the bHLH domain; it reads DRRKAATLRERRRLKKINEAFDALKRKTVANPNQRLPKVEILRSAISYIERL. The tract at residues 155 to 189 is disordered; sequence DEQERSQSGASDTRNDKEQNRPSGGDYRWKKASNT.

As to quaternary structure, efficient DNA binding requires dimerization with another bHLH protein.

It localises to the nucleus. Involved in muscle differentiation (myogenic factor). Induces fibroblasts to differentiate into myoblasts. Probable sequence specific DNA-binding protein. The polypeptide is Myogenic factor 6 (myf6) (Takifugu rubripes (Japanese pufferfish)).